The primary structure comprises 206 residues: Thymidylate kinase (206 aa).

14–21 (GGEGIGKS) is an ATP binding site.

Belongs to the thymidylate kinase family.

The catalysed reaction is dTMP + ATP = dTDP + ADP. Functionally, phosphorylation of dTMP to form dTDP in both de novo and salvage pathways of dTTP synthesis. The chain is Thymidylate kinase from Rickettsia bellii (strain RML369-C).